We begin with the raw amino-acid sequence, 82 residues long: Large ribosomal subunit protein bL31 (82 aa).

Zn(2+)-binding residues include cysteine 16, cysteine 18, cysteine 37, and cysteine 40.

Belongs to the bacterial ribosomal protein bL31 family. Type A subfamily. In terms of assembly, part of the 50S ribosomal subunit. Zn(2+) serves as cofactor.

Binds the 23S rRNA. In Blochmanniella pennsylvanica (strain BPEN), this protein is Large ribosomal subunit protein bL31.